Reading from the N-terminus, the 430-residue chain is MRRFVTLLIALLCLSATAVQAQVEIRAPGQQTIAVANTQLVPLSGTPLPAIAAELHDVMAADLELSGLFRQLDPAAFLDDARRPGLTSSRVDFNQWALLGAEILIKGGYQLQGERLLVDFRLYDVVHRRLLTGRRYAGLRRDVRTMAHKFADQVLKSVTGREGPFSSRIAYIDNRTGHKELYLMDTDGANALRLTDHRSIVLNPDFSPNGREVIYTSYRRGNPDLYRKQLSTGQEARLAFKKGLNIAARFRPDGREIALTQSATGNPELMLLGTDGSRRRRLTSHWGIDVDPSWSPAGDRLAFVSDRQGNPHIFVMDLLGGQTARLTANGKYNATPAWSPDGKRIAFTRLEKGVFDIYTVRPDGTDERRLTFGPGNKEHPRWSPDSRFLVYSSDQDGRKGIYIMRADGTGIRRISAGGGQCQHPAWSGQR.

Residues 1–21 form the signal peptide; the sequence is MRRFVTLLIALLCLSATAVQA.

This sequence belongs to the TolB family. In terms of assembly, the Tol-Pal system is composed of five core proteins: the inner membrane proteins TolA, TolQ and TolR, the periplasmic protein TolB and the outer membrane protein Pal. They form a network linking the inner and outer membranes and the peptidoglycan layer.

It is found in the periplasm. Functionally, part of the Tol-Pal system, which plays a role in outer membrane invagination during cell division and is important for maintaining outer membrane integrity. The sequence is that of Tol-Pal system protein TolB from Syntrophotalea carbinolica (strain DSM 2380 / NBRC 103641 / GraBd1) (Pelobacter carbinolicus).